Here is a 135-residue protein sequence, read N- to C-terminus: Ribosome-binding factor A (135 aa).

The protein belongs to the RbfA family. Monomer. Binds 30S ribosomal subunits, but not 50S ribosomal subunits or 70S ribosomes.

It localises to the cytoplasm. Functionally, one of several proteins that assist in the late maturation steps of the functional core of the 30S ribosomal subunit. Associates with free 30S ribosomal subunits (but not with 30S subunits that are part of 70S ribosomes or polysomes). Required for efficient processing of 16S rRNA. May interact with the 5'-terminal helix region of 16S rRNA. The polypeptide is Ribosome-binding factor A (Hyphomonas neptunium (strain ATCC 15444)).